Consider the following 317-residue polypeptide: Tyrosine--tRNA ligase (317 aa).

Tyr33 provides a ligand contact to L-tyrosine. The short motif at 38–46 (PSGKIHMGH) is the 'HIGH' region element. 4 residues coordinate L-tyrosine: Tyr155, Gln159, Asp162, and Gln177. The short motif at 211-215 (KMASS) is the 'KMSKS' region element. Ser214 serves as a coordination point for ATP.

Belongs to the class-I aminoacyl-tRNA synthetase family. TyrS type 3 subfamily. In terms of assembly, homodimer.

The protein resides in the cytoplasm. The catalysed reaction is tRNA(Tyr) + L-tyrosine + ATP = L-tyrosyl-tRNA(Tyr) + AMP + diphosphate + H(+). In terms of biological role, catalyzes the attachment of tyrosine to tRNA(Tyr) in a two-step reaction: tyrosine is first activated by ATP to form Tyr-AMP and then transferred to the acceptor end of tRNA(Tyr). The protein is Tyrosine--tRNA ligase of Methanosarcina barkeri (strain Fusaro / DSM 804).